The chain runs to 344 residues: Fructose-1,6-bisphosphatase class 1 (344 aa).

Mg(2+) contacts are provided by Glu107, Asp129, Leu131, and Asp132. Substrate-binding residues include Asn224, Tyr252, and Lys282. Glu288 is a Mg(2+) binding site.

The protein belongs to the FBPase class 1 family. In terms of assembly, homotetramer. It depends on Mg(2+) as a cofactor.

It is found in the cytoplasm. It catalyses the reaction beta-D-fructose 1,6-bisphosphate + H2O = beta-D-fructose 6-phosphate + phosphate. It functions in the pathway carbohydrate biosynthesis; Calvin cycle. This chain is Fructose-1,6-bisphosphatase class 1, found in Synechococcus sp. (strain ATCC 27144 / PCC 6301 / SAUG 1402/1) (Anacystis nidulans).